A 286-amino-acid chain; its full sequence is Translocon-associated protein subunit alpha (286 aa).

The N-terminal stretch at 1–21 is a signal peptide; that stretch reads MRLLPRLLLLLLLVFPATVLL. At 22 to 207 the chain is on the lumenal side; that stretch reads RGGPGGSLAE…EREDGLDGQT (186 aa). Residues 28 to 83 are disordered; that stretch reads SLAEAQDLSEDEETVEDSVIEDEDDEAEVEEDEPTDLAEDREEEDVSGEPEASPSA. The segment covering 34–75 has biased composition (acidic residues); that stretch reads DLSEDEETVEDSVIEDEDDEAEVEEDEPTDLAEDREEEDVSG. 2 N-linked (GlcNAc...) asparagine glycosylation sites follow: Asn136 and Asn191. The chain crosses the membrane as a helical span at residues 208–228; it reads IFMYMSLAGLGLLVVVGLHQL. The Cytoplasmic segment spans residues 229 to 286; that stretch reads LESRNRKRPIQKVEMGTSSQNDVDMSWIPQETLNQINKASPRRLPRKRPQKRSVGSDE. Ser247 carries the phosphoserine modification. A Phosphothreonine modification is found at Thr260. The segment at 264-286 is disordered; sequence INKASPRRLPRKRPQKRSVGSDE. Ser268 is subject to Phosphoserine. Residues 268–279 are compositionally biased toward basic residues; that stretch reads SPRRLPRKRPQK.

The protein belongs to the TRAP-alpha family. As to quaternary structure, heterotetramer of TRAP-alpha, TRAP-beta, TRAP-delta and TRAP-gamma. Interacts with palmitoylated calnexin (CALX), the interaction is required for efficient folding of glycosylated proteins. Post-translationally, phosphorylated in its cytoplasmic tail.

The protein resides in the endoplasmic reticulum membrane. Functionally, TRAP proteins are part of a complex whose function is to bind calcium to the ER membrane and thereby regulate the retention of ER resident proteins. May be involved in the recycling of the translocation apparatus after completion of the translocation process or may function as a membrane-bound chaperone facilitating folding of translocated proteins. This is Translocon-associated protein subunit alpha (SSR1) from Oryctolagus cuniculus (Rabbit).